A 379-amino-acid polypeptide reads, in one-letter code: MKILRKNHPLLKIVNHSFIDLPTPSNISSWWNFGSLLGMCLVIQILTGLFLAMHYTSDTTTAFSSVAHICRDVNYGWLIRYLHANGASMFFICLFIHVGRGIYYGSYVLSETWNIGIILLLTTMATAFVGYVLPWGQMSFWGATVITNLLSAIPYIGNTLVEWIWGGFSVDKATLTRFFAFHFILPFIIAAFALVHLLFLHETGSNNPSGLNSDSDKIPFHPYYTIKDLLGIFLLLLILMALALFFPDVLGDPDNFTPANPLNTPAHIKPEWYFLFAYAILRSIPNKLGGVLALILSILILAAFPLLNTSKQQGLIFRPVTQTIYWIFIANLLVLTWIGGQPVEYPFTMIGQIASVTYFTIITILIPISNTIENNIIKL.

Helical transmembrane passes span 33 to 53 (FGSL…FLAM), 77 to 98 (WLIR…FIHV), 113 to 133 (WNIG…GYVL), and 178 to 198 (FFAF…VHLL). Heme b contacts are provided by His-83 and His-97. His-182 and His-196 together coordinate heme b. An a ubiquinone-binding site is contributed by His-201. Transmembrane regions (helical) follow at residues 226–246 (IKDL…ALFF), 288–308 (LGGV…PLLN), 320–340 (VTQT…WIGG), and 347–367 (FTMI…ILIP).

The protein belongs to the cytochrome b family. In terms of assembly, the cytochrome bc1 complex contains 11 subunits: 3 respiratory subunits (MT-CYB, CYC1 and UQCRFS1), 2 core proteins (UQCRC1 and UQCRC2) and 6 low-molecular weight proteins (UQCRH/QCR6, UQCRB/QCR7, UQCRQ/QCR8, UQCR10/QCR9, UQCR11/QCR10 and a cleavage product of UQCRFS1). This cytochrome bc1 complex then forms a dimer. It depends on heme b as a cofactor.

Its subcellular location is the mitochondrion inner membrane. Its function is as follows. Component of the ubiquinol-cytochrome c reductase complex (complex III or cytochrome b-c1 complex) that is part of the mitochondrial respiratory chain. The b-c1 complex mediates electron transfer from ubiquinol to cytochrome c. Contributes to the generation of a proton gradient across the mitochondrial membrane that is then used for ATP synthesis. The protein is Cytochrome b (MT-CYB) of Akodon philipmyersi (Myers' grass mouse).